The following is a 232-amino-acid chain: Proteasome subunit alpha type-2 (232 aa).

The protein belongs to the peptidase T1A family. The 26S proteasome consists of a 20S proteasome core and two 19S regulatory subunits. The 20S proteasome core is composed of 28 subunits that are arranged in four stacked rings, resulting in a barrel-shaped structure. The two end rings are each formed by seven alpha subunits, and the two central rings are each formed by seven beta subunits. The catalytic chamber with the active sites is on the inside of the barrel.

It is found in the cytoplasm. The protein resides in the nucleus. Functionally, the proteasome is a multicatalytic proteinase complex which is characterized by its ability to cleave peptides with Arg, Phe, Tyr, Leu, and Glu adjacent to the leaving group at neutral or slightly basic pH. The proteasome has an ATP-dependent proteolytic activity. This chain is Proteasome subunit alpha type-2 (psmA2), found in Dictyostelium discoideum (Social amoeba).